Here is a 231-residue protein sequence, read N- to C-terminus: MNDPKVVVALDFDRKQDALSFVDKIQPTDARLKVGKEMFTYFGPEFVKQLTGKGFDVFLDLKFHDIPNTVAKAVTAAADLGVWMVNVHASGGSQMMTKAKQALDNYGNDAPLLIAVTVLTSMGQEDLHGLGINKTPAEQVNFLANLTKQSGLDGVVCSAWEAEQLKADLGKEFKLITPGIRPAGSAQDDQQRIMTPKQAIDVGVDYLVIGRPITKAVDPQLVLQQINGTIR.

Substrate is bound by residues D11, K33, 60 to 69 (DLKFHDIPNT), T120, R181, Q190, G210, and R211. K62 serves as the catalytic Proton donor.

Belongs to the OMP decarboxylase family. Type 1 subfamily. As to quaternary structure, homodimer.

The enzyme catalyses orotidine 5'-phosphate + H(+) = UMP + CO2. It functions in the pathway pyrimidine metabolism; UMP biosynthesis via de novo pathway; UMP from orotate: step 2/2. In terms of biological role, catalyzes the decarboxylation of orotidine 5'-monophosphate (OMP) to uridine 5'-monophosphate (UMP). The polypeptide is Orotidine 5'-phosphate decarboxylase (Colwellia psychrerythraea (strain 34H / ATCC BAA-681) (Vibrio psychroerythus)).